The primary structure comprises 562 residues: Dihydroxy-acid dehydratase (562 aa).

Position 55 (cysteine 55) interacts with [2Fe-2S] cluster. Aspartate 87 contacts Mg(2+). Cysteine 128 is a [2Fe-2S] cluster binding site. Residues aspartate 129 and lysine 130 each coordinate Mg(2+). The residue at position 130 (lysine 130) is an N6-carboxylysine. Cysteine 200 is a binding site for [2Fe-2S] cluster. Glutamate 451 is a binding site for Mg(2+). Catalysis depends on serine 477, which acts as the Proton acceptor.

Belongs to the IlvD/Edd family. As to quaternary structure, homodimer. [2Fe-2S] cluster serves as cofactor. Mg(2+) is required as a cofactor.

It carries out the reaction (2R)-2,3-dihydroxy-3-methylbutanoate = 3-methyl-2-oxobutanoate + H2O. It catalyses the reaction (2R,3R)-2,3-dihydroxy-3-methylpentanoate = (S)-3-methyl-2-oxopentanoate + H2O. Its pathway is amino-acid biosynthesis; L-isoleucine biosynthesis; L-isoleucine from 2-oxobutanoate: step 3/4. It functions in the pathway amino-acid biosynthesis; L-valine biosynthesis; L-valine from pyruvate: step 3/4. Functionally, functions in the biosynthesis of branched-chain amino acids. Catalyzes the dehydration of (2R,3R)-2,3-dihydroxy-3-methylpentanoate (2,3-dihydroxy-3-methylvalerate) into 2-oxo-3-methylpentanoate (2-oxo-3-methylvalerate) and of (2R)-2,3-dihydroxy-3-methylbutanoate (2,3-dihydroxyisovalerate) into 2-oxo-3-methylbutanoate (2-oxoisovalerate), the penultimate precursor to L-isoleucine and L-valine, respectively. The chain is Dihydroxy-acid dehydratase from Cytophaga hutchinsonii (strain ATCC 33406 / DSM 1761 / CIP 103989 / NBRC 15051 / NCIMB 9469 / D465).